Reading from the N-terminus, the 536-residue chain is Formate--tetrahydrofolate ligase (536 aa).

Residue 51–58 participates in ATP binding; the sequence is TPAGEGKT.

It belongs to the formate--tetrahydrofolate ligase family.

The catalysed reaction is (6S)-5,6,7,8-tetrahydrofolate + formate + ATP = (6R)-10-formyltetrahydrofolate + ADP + phosphate. The protein operates within one-carbon metabolism; tetrahydrofolate interconversion. This chain is Formate--tetrahydrofolate ligase, found in Thermoplasma acidophilum (strain ATCC 25905 / DSM 1728 / JCM 9062 / NBRC 15155 / AMRC-C165).